We begin with the raw amino-acid sequence, 589 residues long: Proton pump-interactor 2 (589 aa).

Residues 205–245 are a coiled coil; sequence EDSLAEKEASINRVKSMAVELNEVKKELDAITWKINHLSDK. 4 stretches are compositionally biased toward basic and acidic residues: residues 370-383, 395-408, 426-450, and 504-534; these read KGGE…REDS, TDKR…KAMD, VYEK…REEQ, and ESDH…KERS. Disordered regions lie at residues 370–450 and 485–534; these read KGGE…REEQ and KECE…KERS. Positions 431-500 form a coiled coil; sequence KKEEEEVDEE…AKKKAAANSS (70 aa). Residues 568–588 form a helical membrane-spanning segment; that stretch reads WVWGLSSAALAVALFLVVLLL.

It belongs to the plant Proton pump-interactor protein family. In terms of tissue distribution, expressed in seedlings and flowers.

It localises to the cell membrane. The protein localises to the endoplasmic reticulum membrane. May regulate plasma membrane ATPase activity. The polypeptide is Proton pump-interactor 2 (PPI2) (Arabidopsis thaliana (Mouse-ear cress)).